Reading from the N-terminus, the 153-residue chain is Deoxyuridine 5'-triphosphate nucleotidohydrolase (153 aa).

Residues 71–73 (RSG), Asn84, 88–90 (LID), and Met98 contribute to the substrate site.

This sequence belongs to the dUTPase family. The cofactor is Mg(2+).

It carries out the reaction dUTP + H2O = dUMP + diphosphate + H(+). It functions in the pathway pyrimidine metabolism; dUMP biosynthesis; dUMP from dCTP (dUTP route): step 2/2. Functionally, this enzyme is involved in nucleotide metabolism: it produces dUMP, the immediate precursor of thymidine nucleotides and it decreases the intracellular concentration of dUTP so that uracil cannot be incorporated into DNA. The protein is Deoxyuridine 5'-triphosphate nucleotidohydrolase of Wigglesworthia glossinidia brevipalpis.